A 161-amino-acid polypeptide reads, in one-letter code: Protein yippee-like B0546.4 (161 aa).

A Yippee domain is found at 14-111 (SLYGCVVCNT…IENANFEKIA (98 aa)). Cys18, Cys21, Cys74, and Cys77 together coordinate Zn(2+). Positions 117–161 (PLGEDRQEAPPAPNLEMSRYPLEAEKKSRPQYRTVSVSSSSSAEC) are disordered. The span at 151-161 (VSVSSSSSAEC) shows a compositional bias: low complexity.

It belongs to the yippee family.

In Caenorhabditis elegans, this protein is Protein yippee-like B0546.4.